The chain runs to 490 residues: Cysteine--tRNA ligase (490 aa).

Cysteine 43 contributes to the Zn(2+) binding site. The 'HIGH' region motif lies at 45 to 55 (MTVQSSPHLGH). A disordered region spans residues 177-204 (VDEMSPAEDSDPRGKRDPRDFALWKGHK). The segment covering 186 to 204 (SDPRGKRDPRDFALWKGHK) has biased composition (basic and acidic residues). Positions 228, 253, and 257 each coordinate Zn(2+). The short motif at 284-288 (KMSKS) is the 'KMSKS' region element. Lysine 287 lines the ATP pocket.

The protein belongs to the class-I aminoacyl-tRNA synthetase family. Monomer. Requires Zn(2+) as cofactor.

The protein localises to the cytoplasm. The catalysed reaction is tRNA(Cys) + L-cysteine + ATP = L-cysteinyl-tRNA(Cys) + AMP + diphosphate. The chain is Cysteine--tRNA ligase from Cutibacterium acnes (strain DSM 16379 / KPA171202) (Propionibacterium acnes).